The following is a 600-amino-acid chain: MTQTQPVTPTPPASFQTQHDPRTRLGATPLPGGAGTRFRLWTSTARTVAVRVNGTEHVMTSLGGGIYELELPVGPGARYLFVLDGVPTPDPYARFLPDGVHGEAEVVDFGTFDWTDADWHGIKLADCVFYEVHVGTFTPEGTYRAAAEKLPYLKELGVTAIQVMPLAAFDGQRGWGYDGAAFYAPYAPYGRPEDLMALVDAAHRLGLGVFLDVVYNHFGPSGNYLSSYAPSYFTDRFSSAWGMGLDYAEPHMRRYVTGNARMWLRDYHFDGLRLDATPYMTDDSETHILTELAQEIHELGGTHLLLAEDHRNLPDLVTVNHLDGIWTDDFHHETRVTLTGEQEGYYAGYRGGAEALAYTIRRGWRYEGQFWAVKGEEHERGHPSDALEAPNFVYCIQNHDQIGNRPLGERLHQSDGVTLHEYRGAAALLLPMTPLLFQGQEWAASTPFQFFSDHAGELGQAVSEGRKKEFGGFSGFSGEDVPDPQAEQTFLNSKLNWAEREGGEHARTLRLYRDLLRLRREDPVLHNRQRENLTTGHDGDVLWVRTVTGAGERVLLWNLGQDTRAVAEVKLPFTVPRRLLLHTEGREDLTLGAGEAVLVG.

The disordered stretch occupies residues 1 to 34; sequence MTQTQPVTPTPPASFQTQHDPRTRLGATPLPGGA. 273 to 278 provides a ligand contact to substrate; that stretch reads RLDATP. D275 (nucleophile) is an active-site residue. E308 acts as the Proton donor in catalysis. Substrate is bound by residues 328–332, E376, and 399–404; these read DDFHH and HDQIGN.

It belongs to the glycosyl hydrolase 13 family. As to quaternary structure, monomer.

Its subcellular location is the cytoplasm. It catalyses the reaction hydrolysis of (1-&gt;4)-alpha-D-glucosidic linkage in 4-alpha-D-[(1-&gt;4)-alpha-D-glucanosyl]n trehalose to yield trehalose and (1-&gt;4)-alpha-D-glucan.. It functions in the pathway glycan biosynthesis; trehalose biosynthesis. The sequence is that of Malto-oligosyltrehalose trehalohydrolase (treZ) from Deinococcus radiodurans (strain ATCC 13939 / DSM 20539 / JCM 16871 / CCUG 27074 / LMG 4051 / NBRC 15346 / NCIMB 9279 / VKM B-1422 / R1).